Reading from the N-terminus, the 246-residue chain is uncharacterized protein (246 aa).

4 consecutive transmembrane segments (helical) span residues 32-52 (TLFF…VGFI), 69-89 (IIAI…MCPF), 121-141 (IYFK…GVKI), and 146-166 (LAYL…MFFC). 2 4Fe-4S ferredoxin-type domains span residues 185-213 (FKLK…ITEK) and 210-239 (ITEK…FSAF). [4Fe-4S] cluster-binding residues include C194, C197, C200, C204, C219, C222, C225, and C229.

The protein resides in the cell membrane. This is an uncharacterized protein from Methanocaldococcus jannaschii (strain ATCC 43067 / DSM 2661 / JAL-1 / JCM 10045 / NBRC 100440) (Methanococcus jannaschii).